Reading from the N-terminus, the 287-residue chain is Phosphoribosylaminoimidazole-succinocarboxamide synthase (287 aa).

It belongs to the SAICAR synthetase family.

It catalyses the reaction 5-amino-1-(5-phospho-D-ribosyl)imidazole-4-carboxylate + L-aspartate + ATP = (2S)-2-[5-amino-1-(5-phospho-beta-D-ribosyl)imidazole-4-carboxamido]succinate + ADP + phosphate + 2 H(+). Its pathway is purine metabolism; IMP biosynthesis via de novo pathway; 5-amino-1-(5-phospho-D-ribosyl)imidazole-4-carboxamide from 5-amino-1-(5-phospho-D-ribosyl)imidazole-4-carboxylate: step 1/2. This is Phosphoribosylaminoimidazole-succinocarboxamide synthase from Neisseria meningitidis serogroup B (strain ATCC BAA-335 / MC58).